Consider the following 646-residue polypeptide: Phosphomethylpyrimidine synthase (646 aa).

Residues Asn-235, Met-264, Tyr-293, His-329, 349–351 (SRG), 390–393 (DGLR), and Glu-429 each bind substrate. Residue His-433 coordinates Zn(2+). Substrate is bound at residue Tyr-456. His-497 contributes to the Zn(2+) binding site. The [4Fe-4S] cluster site is built by Cys-577, Cys-580, and Cys-585.

Belongs to the ThiC family. In terms of assembly, homodimer. [4Fe-4S] cluster serves as cofactor.

It carries out the reaction 5-amino-1-(5-phospho-beta-D-ribosyl)imidazole + S-adenosyl-L-methionine = 4-amino-2-methyl-5-(phosphooxymethyl)pyrimidine + CO + 5'-deoxyadenosine + formate + L-methionine + 3 H(+). It functions in the pathway cofactor biosynthesis; thiamine diphosphate biosynthesis. Functionally, catalyzes the synthesis of the hydroxymethylpyrimidine phosphate (HMP-P) moiety of thiamine from aminoimidazole ribotide (AIR) in a radical S-adenosyl-L-methionine (SAM)-dependent reaction. The chain is Phosphomethylpyrimidine synthase from Vibrio campbellii (strain ATCC BAA-1116).